The sequence spans 211 residues: Thiamine-phosphate synthase (211 aa).

4-amino-2-methyl-5-(diphosphooxymethyl)pyrimidine-binding positions include 36-40 (QLREK) and Asn68. Positions 69 and 88 each coordinate Mg(2+). Ser107 is a binding site for 4-amino-2-methyl-5-(diphosphooxymethyl)pyrimidine. 133 to 135 (TGS) contributes to the 2-[(2R,5Z)-2-carboxy-4-methylthiazol-5(2H)-ylidene]ethyl phosphate binding site. Position 136 (Lys136) interacts with 4-amino-2-methyl-5-(diphosphooxymethyl)pyrimidine. Residues Gly167 and 187-188 (IT) each bind 2-[(2R,5Z)-2-carboxy-4-methylthiazol-5(2H)-ylidene]ethyl phosphate.

Belongs to the thiamine-phosphate synthase family. The cofactor is Mg(2+).

The catalysed reaction is 2-[(2R,5Z)-2-carboxy-4-methylthiazol-5(2H)-ylidene]ethyl phosphate + 4-amino-2-methyl-5-(diphosphooxymethyl)pyrimidine + 2 H(+) = thiamine phosphate + CO2 + diphosphate. It carries out the reaction 2-(2-carboxy-4-methylthiazol-5-yl)ethyl phosphate + 4-amino-2-methyl-5-(diphosphooxymethyl)pyrimidine + 2 H(+) = thiamine phosphate + CO2 + diphosphate. It catalyses the reaction 4-methyl-5-(2-phosphooxyethyl)-thiazole + 4-amino-2-methyl-5-(diphosphooxymethyl)pyrimidine + H(+) = thiamine phosphate + diphosphate. Its pathway is cofactor biosynthesis; thiamine diphosphate biosynthesis; thiamine phosphate from 4-amino-2-methyl-5-diphosphomethylpyrimidine and 4-methyl-5-(2-phosphoethyl)-thiazole: step 1/1. Condenses 4-methyl-5-(beta-hydroxyethyl)thiazole monophosphate (THZ-P) and 2-methyl-4-amino-5-hydroxymethyl pyrimidine pyrophosphate (HMP-PP) to form thiamine monophosphate (TMP). The chain is Thiamine-phosphate synthase from Haloarcula marismortui (strain ATCC 43049 / DSM 3752 / JCM 8966 / VKM B-1809) (Halobacterium marismortui).